We begin with the raw amino-acid sequence, 148 residues long: Large ribosomal subunit protein bL9 (148 aa).

The protein belongs to the bacterial ribosomal protein bL9 family.

Functionally, binds to the 23S rRNA. The chain is Large ribosomal subunit protein bL9 from Thermobifida fusca (strain YX).